A 48-amino-acid chain; its full sequence is Delta-ctenitoxin-Pn1b (48 aa).

Disulfide bonds link C1-C15, C8-C21, C12-C48, C14-C31, and C23-C29.

This sequence belongs to the neurotoxin 03 (Tx2) family. 05 subfamily. Expressed by the venom gland.

It localises to the secreted. Functionally, insecticidal neurotoxin that reversibly inhibits the N-methyl-D-aspartate (NMDA)-subtype of ionotropic glutamate receptor (GRIN) and inhibits inactivation of insect sodium channels (Nav). Inhibits glutamate uptake in rat brain synaptosomes. In vivo, induces immediate excitatory effects when injected intrathoracically in houseflies and cockroaches. This is Delta-ctenitoxin-Pn1b from Phoneutria nigriventer (Brazilian armed spider).